The chain runs to 768 residues: Tripartite motif-containing protein 67 (768 aa).

Residues 7-42 (CPVCGSLFREPIILPCSHNVCLPCARTIAVQTPDGE) form an RING-type; degenerate zinc finger. Positions 55-70 (AAAAATPPDQDAAAGA) are enriched in low complexity. Disordered stretches follow at residues 55–74 (AAAAATPPDQDAAAGATSGG) and 247–284 (QPPPPPTPPEATPAVTGTSTASSAGGCRSPGGAGASAP). The segment at 201-248 (AICQLCDRTPPEPAATLCEQCDVLYCATCQLKCHPSRGPFAKHRLVQP) adopts a B box-type 1; degenerate zinc-finger fold. Residues 247 to 257 (QPPPPPTPPEA) are compositionally biased toward pro residues. The B box-type 2 zinc-finger motif lies at 285 to 327 (RKFPTCPEHEMENYSMYCVSCRSPVCYMCLEEGRHSKHEVKPL). Zn(2+)-binding residues include Cys-290, His-293, Cys-313, and His-319. The stretch at 332-369 (KQHKAQLSQALNGVSDKAKEAKEFLVQLKNILQQIQEN) forms a coiled coil. Residues 435–493 (IKEDDPSGFLQISDALIKRVQTSQEQWVKGALEPKVSAEFDLTLDSEPLLQAIHQLDFV) enclose the COS domain. Residues 498 to 592 (PPVPLLQLEK…KTVVLQTSDV (95 aa)) form the Fibronectin type-III domain. Positions 574-765 (NSSGVGPYSK…VPTNLGRPKL (192 aa)) constitute a B30.2/SPRY domain.

It is found in the cytoplasm. Its subcellular location is the cytoskeleton. This chain is Tripartite motif-containing protein 67 (Trim67), found in Mus musculus (Mouse).